A 237-amino-acid polypeptide reads, in one-letter code: uncharacterized protein (237 aa).

The next 7 membrane-spanning stretches (helical) occupy residues 19-39 (ILNGIWLITALGLVATAGLAW), 51-71 (YDSPPMYVAIGLLLLCMYGLS), 81-101 (IAGVIYLFLLSLVAIVVASLV), 106-126 (IIIVFSTAGAMFLISMLAGLL), 136-156 (FIIMMTLTGLALVIIVNAALM), 159-179 (RPIWIISCLMIVLWSGIISHG), and 209-229 (LYYYFIGFFGILAAIAITLVW).

Its subcellular location is the cell membrane. This is an uncharacterized protein from Escherichia coli (strain K12).